The chain runs to 276 residues: Elongation factor Ts (276 aa).

Residues 80–83 are involved in Mg(2+) ion dislocation from EF-Tu; sequence TDFV.

Belongs to the EF-Ts family.

It localises to the cytoplasm. Associates with the EF-Tu.GDP complex and induces the exchange of GDP to GTP. It remains bound to the aminoacyl-tRNA.EF-Tu.GTP complex up to the GTP hydrolysis stage on the ribosome. In Kocuria rhizophila (strain ATCC 9341 / DSM 348 / NBRC 103217 / DC2201), this protein is Elongation factor Ts.